The chain runs to 292 residues: Non-homologous end joining protein Ku (292 aa).

The 185-residue stretch at 12-196 (KLSLVTCPVV…KITKDMVELA (185 aa)) folds into the Ku domain. The interval 231–292 (KPIKLPEPEE…RSAARQRKAG (62 aa)) is disordered. A compositionally biased stretch (basic residues) spans 271 to 292 (APAHRRPAKKAHRSAARQRKAG).

This sequence belongs to the prokaryotic Ku family. As to quaternary structure, homodimer. Interacts with LigD.

In terms of biological role, with LigD forms a non-homologous end joining (NHEJ) DNA repair enzyme, which repairs dsDNA breaks with reduced fidelity. Binds linear dsDNA with 5'- and 3'- overhangs but not closed circular dsDNA nor ssDNA. Recruits and stimulates the ligase activity of LigD. This Bradyrhizobium sp. (strain ORS 278) protein is Non-homologous end joining protein Ku.